The chain runs to 347 residues: E3 ubiquitin-protein ligase ARK2C (347 aa).

2 disordered regions span residues 23 to 79 (PFQR…GTLH) and 268 to 289 (PHKY…GEES). The ubiquitin binding stretch occupies residues 267-269 (FPH). Basic and acidic residues predominate over residues 276–285 (PQDSKGKKDE). The Zn(2+) site is built by Cys295 and Cys298. The RING-type; atypical zinc finger occupies 295–336 (CTICLSMLEDGEDVRRLPCMHLFHQLCVDQWLAMSKKCPICR). The ubiquitin binding stretch occupies residues 310–314 (RLPCM). Zn(2+) is bound by residues His318 and Cys321.

It belongs to the Arkadia family. Monomer; binding to the ubiquitin-conjugating enzyme E2 does not trigger homodimerization. Expressed in neurons of the nervous system.

The protein resides in the nucleus. It catalyses the reaction S-ubiquitinyl-[E2 ubiquitin-conjugating enzyme]-L-cysteine + [acceptor protein]-L-lysine = [E2 ubiquitin-conjugating enzyme]-L-cysteine + N(6)-ubiquitinyl-[acceptor protein]-L-lysine.. With respect to regulation, binds free ubiquitin non-covalently via its RING-type zinc finger. Ubiquitin-binding leads to enhance the E3 ubiquitin-protein ligase activity by stabilizing the ubiquitin-conjugating enzyme E2 (donor ubiquitin) in the 'closed' conformation and activating ubiquitin transfer. Its function is as follows. E3 ubiquitin-protein ligase that acts as a regulator of motor axon elongation. Required for efficient motor axon extension in the dorsal forelimb by enhancing the transcriptional responses of the SMAD1/SMAD5/SMAD8 effectors, which are activated downstream of BMP. Acts by mediating ubiquitination and degradation of SMAD inhibitors such as SMAD6, SMAD7, SKI and SNON isoform of SKIL. The polypeptide is E3 ubiquitin-protein ligase ARK2C (Mus musculus (Mouse)).